A 500-amino-acid polypeptide reads, in one-letter code: Probable malate:quinone oxidoreductase (500 aa).

This sequence belongs to the MQO family. It depends on FAD as a cofactor.

The catalysed reaction is (S)-malate + a quinone = a quinol + oxaloacetate. The protein operates within carbohydrate metabolism; tricarboxylic acid cycle; oxaloacetate from (S)-malate (quinone route): step 1/1. This is Probable malate:quinone oxidoreductase from Bacillus cytotoxicus (strain DSM 22905 / CIP 110041 / 391-98 / NVH 391-98).